The sequence spans 253 residues: Carboxy-S-adenosyl-L-methionine synthase (253 aa).

Residues Y49, G74–S76, D98–N99, and N141 each bind S-adenosyl-L-methionine.

It belongs to the class I-like SAM-binding methyltransferase superfamily. Cx-SAM synthase family.

The enzyme catalyses prephenate + S-adenosyl-L-methionine = carboxy-S-adenosyl-L-methionine + 3-phenylpyruvate + H2O. Catalyzes the conversion of S-adenosyl-L-methionine (SAM) to carboxy-S-adenosyl-L-methionine (Cx-SAM). The polypeptide is Carboxy-S-adenosyl-L-methionine synthase (Trichodesmium erythraeum (strain IMS101)).